A 144-amino-acid polypeptide reads, in one-letter code: Intraflagellar transport protein 25 homolog (144 aa).

Asn29, Asp32, and Thr37 together coordinate Ca(2+).

Belongs to the IFT25 family. In terms of assembly, component of the IFT complex B, at least composed of IFT20, IFT22, IFT25, IFT27, IFT46, IFT52, TRAF3IP1/IFT54, IFT57, IFT74, IFT80, IFT81, and IFT88. Interacts with IFT27. Interacts with IFT88. As to expression, detected in placenta.

The protein localises to the cell projection. The protein resides in the cilium. Functionally, component of the IFT complex B required for sonic hedgehog/SHH signaling. May mediate transport of SHH components: required for the export of SMO and PTCH1 receptors out of the cilium and the accumulation of GLI2 at the ciliary tip in response to activation of the SHH pathway, suggesting it is involved in the dynamic transport of SHH signaling molecules within the cilium. Not required for ciliary assembly. Its role in intraflagellar transport is mainly seen in tissues rich in ciliated cells such as kidney and testis. Essential for male fertility, spermiogenesis and sperm flagella formation. Plays a role in the early development of the kidney. May be involved in the regulation of ureteric bud initiation. This is Intraflagellar transport protein 25 homolog from Homo sapiens (Human).